Here is a 296-residue protein sequence, read N- to C-terminus: Putative thiosulfate sulfurtransferase SseA (296 aa).

2 consecutive Rhodanese domains span residues glycine 31–leucine 138 and isoleucine 168–threonine 286. The active-site Cysteine persulfide intermediate is cysteine 245. Arginine 250 is a binding site for substrate.

The catalysed reaction is thiosulfate + hydrogen cyanide = thiocyanate + sulfite + 2 H(+). The chain is Putative thiosulfate sulfurtransferase SseA (sseA) from Mycobacterium leprae (strain TN).